Reading from the N-terminus, the 67-residue chain is SPbeta prophage-derived uncharacterized protein YoqK (67 aa).

The polypeptide is SPbeta prophage-derived uncharacterized protein YoqK (yoqK) (Bacillus subtilis (strain 168)).